Consider the following 332-residue polypeptide: 2,3-diketo-L-gulonate reductase (332 aa).

The active-site Proton donor is His44. Residues Ile168–Ser174, Trp224–Lys225, and Gly304–Glu306 contribute to the NAD(+) site.

This sequence belongs to the LDH2/MDH2 oxidoreductase family. DlgD subfamily. In terms of assembly, homodimer.

The protein localises to the cytoplasm. It catalyses the reaction 3-dehydro-L-gulonate + NAD(+) = 2,3-dioxo-L-gulonate + NADH + H(+). It carries out the reaction 3-dehydro-L-gulonate + NADP(+) = 2,3-dioxo-L-gulonate + NADPH + H(+). In terms of biological role, catalyzes the reduction of 2,3-diketo-L-gulonate in the presence of NADH, to form 3-keto-L-gulonate. This Escherichia coli O17:K52:H18 (strain UMN026 / ExPEC) protein is 2,3-diketo-L-gulonate reductase.